The following is a 211-amino-acid chain: ATP phosphoribosyltransferase (211 aa).

It belongs to the ATP phosphoribosyltransferase family. Short subfamily. In terms of assembly, heteromultimer composed of HisG and HisZ subunits.

The protein resides in the cytoplasm. It carries out the reaction 1-(5-phospho-beta-D-ribosyl)-ATP + diphosphate = 5-phospho-alpha-D-ribose 1-diphosphate + ATP. It functions in the pathway amino-acid biosynthesis; L-histidine biosynthesis; L-histidine from 5-phospho-alpha-D-ribose 1-diphosphate: step 1/9. Its function is as follows. Catalyzes the condensation of ATP and 5-phosphoribose 1-diphosphate to form N'-(5'-phosphoribosyl)-ATP (PR-ATP). Has a crucial role in the pathway because the rate of histidine biosynthesis seems to be controlled primarily by regulation of HisG enzymatic activity. This Pseudomonas putida (strain ATCC 47054 / DSM 6125 / CFBP 8728 / NCIMB 11950 / KT2440) protein is ATP phosphoribosyltransferase.